Consider the following 638-residue polypeptide: Chaperone protein HtpG (638 aa).

Positions 1-343 are a; substrate-binding; that stretch reads MTSTIDSDGA…SADLPLNISR (343 aa). A b region spans residues 344–557; sequence EMIQESPILA…ESGPDRQLEK (214 aa). Positions 558-638 are c; it reads ILVGVGQLTG…VERGLRGSTA (81 aa).

Belongs to the heat shock protein 90 family. As to quaternary structure, homodimer.

It is found in the cytoplasm. In terms of biological role, molecular chaperone. Has ATPase activity. The sequence is that of Chaperone protein HtpG from Nitrobacter hamburgensis (strain DSM 10229 / NCIMB 13809 / X14).